The chain runs to 662 residues: UvrABC system protein B (662 aa).

Residues 25 to 182 (KGIEKGEKFQ…KKLVEIQYER (158 aa)) enclose the Helicase ATP-binding domain. Residue 38–45 (GVTGSGKT) coordinates ATP. Positions 91–114 (YYDYYQPEAYVAQSDTYIEKDASI) match the Beta-hairpin motif. The region spanning 429–595 (QIDDLYTSIQ…TIIKDIREVI (167 aa)) is the Helicase C-terminal domain. Positions 622–657 (DKLIEKYEEEMKEAAQNLQFEKAAHLRDVIYKLKRD) constitute a UVR domain.

It belongs to the UvrB family. In terms of assembly, forms a heterotetramer with UvrA during the search for lesions. Interacts with UvrC in an incision complex.

It is found in the cytoplasm. Functionally, the UvrABC repair system catalyzes the recognition and processing of DNA lesions. A damage recognition complex composed of 2 UvrA and 2 UvrB subunits scans DNA for abnormalities. Upon binding of the UvrA(2)B(2) complex to a putative damaged site, the DNA wraps around one UvrB monomer. DNA wrap is dependent on ATP binding by UvrB and probably causes local melting of the DNA helix, facilitating insertion of UvrB beta-hairpin between the DNA strands. Then UvrB probes one DNA strand for the presence of a lesion. If a lesion is found the UvrA subunits dissociate and the UvrB-DNA preincision complex is formed. This complex is subsequently bound by UvrC and the second UvrB is released. If no lesion is found, the DNA wraps around the other UvrB subunit that will check the other stand for damage. The chain is UvrABC system protein B from Clostridium botulinum (strain Loch Maree / Type A3).